We begin with the raw amino-acid sequence, 124 residues long: Small ribosomal subunit protein uS12 (124 aa).

The tract at residues 1-30 (MPTIQQLVRKGRQDKVAKTKTAALKGSPQR) is disordered. D89 carries the post-translational modification 3-methylthioaspartic acid. The segment at 102-124 (ADTQGVKNRKQARSRYGAKKEKS) is disordered. Positions 108–118 (KNRKQARSRYG) are enriched in basic residues.

Belongs to the universal ribosomal protein uS12 family. In terms of assembly, part of the 30S ribosomal subunit. Contacts proteins S8 and S17. May interact with IF1 in the 30S initiation complex.

Functionally, with S4 and S5 plays an important role in translational accuracy. Interacts with and stabilizes bases of the 16S rRNA that are involved in tRNA selection in the A site and with the mRNA backbone. Located at the interface of the 30S and 50S subunits, it traverses the body of the 30S subunit contacting proteins on the other side and probably holding the rRNA structure together. The combined cluster of proteins S8, S12 and S17 appears to hold together the shoulder and platform of the 30S subunit. The chain is Small ribosomal subunit protein uS12 from Saccharopolyspora erythraea (strain ATCC 11635 / DSM 40517 / JCM 4748 / NBRC 13426 / NCIMB 8594 / NRRL 2338).